The sequence spans 1400 residues: Tensin-2 (1400 aa).

The Phorbol-ester/DAG-type zinc-finger motif lies at 31–79 (PHSFREKVFRKKTPVCAVCKVTIDGTGVSCRVCKVATHRKCEAKVTSSC). At Thr-91 the chain carries Phosphothreonine. A phosphoserine mark is found at Ser-118 and Ser-120. Residues 122-294 (DPLMERRWDL…SYFSGLLSGS (173 aa)) form the Phosphatase tensin-type domain. Catalysis depends on Cys-231, which acts as the Phosphocysteine intermediate. Positions 299–425 (SSPLFLHYVF…ASVEFVFSSS (127 aa)) constitute a C2 tensin-type domain. The segment at 425 to 444 (SPEKVKGNTPRNDPSVSVDY) is disordered. Residues 433-444 (TPRNDPSVSVDY) are compositionally biased toward polar residues. A Phosphoserine modification is found at Ser-455. Phosphotyrosine is present on Tyr-456. Ser-466 is modified (phosphoserine). Phosphothreonine is present on Thr-474. Ser-481 carries the post-translational modification Phosphoserine. Tyr-483 carries the post-translational modification Phosphotyrosine. Positions 488-536 (RVPRQTPPAPSPELPPPPMLSVSSDSGHSSTLTTEHTAESPGRPPPTAA) are disordered. Pro residues predominate over residues 492-506 (QTPPAPSPELPPPPM). Arg-555 carries the post-translational modification Omega-N-methylarginine. A disordered region spans residues 809-1114 (CGSPSEGRGY…DVTQPPEHPL (306 aa)). A phosphoserine mark is found at Ser-820, Ser-825, Ser-830, Ser-832, and Ser-835. Polar residues-rich tracts occupy residues 898 to 917 (CSASSELSGPSTPLHTSSPV) and 929 to 940 (TRSPSLAPTQRL). The residue at position 909 (Thr-909) is a Phosphothreonine. 3 positions are modified to phosphoserine: Ser-931, Ser-941, and Ser-972. A Phosphothreonine modification is found at Thr-977. 2 positions are modified to phosphoserine: Ser-991 and Ser-1003. The segment covering 1046 to 1056 (PEPPQSSPTPA) has biased composition (pro residues). The span at 1082 to 1098 (SGQQPSPPARSTNQHVT) shows a compositional bias: polar residues. Ser-1087 is subject to Phosphoserine. The SH2 domain maps to 1131–1238 (WYKPHLSRDQ…SLPCCLRIPS (108 aa)). Thr-1173 carries the phosphothreonine modification. Ser-1238 is subject to Phosphoserine. Positions 1266–1399 (ACSVLYLTSV…FITKVLLGQR (134 aa)) constitute a PTB domain.

The protein belongs to the PTEN phosphatase protein family. As to quaternary structure, interacts with AXL. Interacts with SYK; leading to its phosphorylation. Interacts with SQSTM1 (via PB1 domain); the interaction leads to sequestration of TNS2 in cytoplasmic aggregates with SQSTM1 and promotes TNS2 ubiquitination and proteasomal degradation. Post-translationally, ubiquitinated following sequestration in cytoplasmic aggregates with SQSTM1, leading to proteasomal degradation. In the adult kidney, expressed mainly in glomeruli (at protein level). In the newborn kidney, localizes on the basal surface of podocytes along the glomerular basement membrane and not in endothelial cells. Low expression levels in anabolic skeletal muscles.

It is found in the cell junction. Its subcellular location is the focal adhesion. It localises to the cell membrane. The protein localises to the cytoplasm. It catalyses the reaction O-phospho-L-tyrosyl-[protein] + H2O = L-tyrosyl-[protein] + phosphate. Functionally, tyrosine-protein phosphatase which regulates cell motility, proliferation and muscle-response to insulin. Phosphatase activity is mediated by binding to phosphatidylinositol-3,4,5-triphosphate (PtdIns(3,4,5)P3) via the SH2 domain. In muscles and under catabolic conditions, dephosphorylates IRS1 leading to its degradation and muscle atrophy. Negatively regulates PI3K-AKT pathway activation. Dephosphorylates nephrin NPHS1 in podocytes which affects mTORC1 complex activity. Under normal glucose conditions, NPHS1 outcompetes IRS1 for binding to phosphatidylinositol 3-kinase (PI3K) which balances mTORC1 activity but high glucose conditions lead to up-regulation of TNS2, increased NPHS1 dephosphorylation and activation of mTORC1, contributing to podocyte hypertrophy and proteinuria. Required for correct podocyte morphology, podocyte-glomerular basement membrane interaction and integrity of the glomerular filtration barrier. Enhances RHOA activation in the presence of DLC1. Plays a role in promoting DLC1-dependent remodeling of the extracellular matrix. The sequence is that of Tensin-2 (Tns2) from Mus musculus (Mouse).